The following is a 185-amino-acid chain: Neuronal vesicle trafficking-associated protein 1 (185 aa).

The Cytoplasmic portion of the chain corresponds to 1–82; the sequence is MVKLGNNFSE…ITEGVSERFK (82 aa). A helical; Signal-anchor for type II membrane protein transmembrane segment spans residues 83 to 103; the sequence is VTVLVLFALAFLTCVVFLVVY. Residues 104–185 are Lumenal-facing; that stretch reads KVYKYDHTCP…QETEAAEKSA (82 aa).

It belongs to the NSG family.

It localises to the membrane. Its subcellular location is the golgi apparatus. The protein localises to the trans-Golgi network membrane. It is found in the endosome membrane. The protein resides in the cell projection. It localises to the dendrite. Its subcellular location is the early endosome membrane. The protein localises to the late endosome membrane. It is found in the lysosome lumen. The protein resides in the recycling endosome membrane. It localises to the cytoplasmic vesicle membrane. Its subcellular location is the golgi stack membrane. The protein localises to the endosome. It is found in the multivesicular body membrane. Its function is as follows. Plays a role in the recycling mechanism in neurons of multiple receptors and acts at the level of early endosomes to promote sorting of receptors toward a recycling pathway. The sequence is that of Neuronal vesicle trafficking-associated protein 1 from Gallus gallus (Chicken).